We begin with the raw amino-acid sequence, 283 residues long: Tumor necrosis factor receptor superfamily member 14 (283 aa).

The first 38 residues, 1 to 38 (MEPPGDWGPPPWRSTPKTDVLRLVLYLTFLGAPCYAPA), serve as a signal peptide directing secretion. Topologically, residues 39-202 (LPSCKEDEYP…GAGTSSSHWV (164 aa)) are extracellular. 8 disulfide bridges follow: Cys-42/Cys-53, Cys-54/Cys-67, Cys-57/Cys-75, Cys-78/Cys-93, Cys-96/Cys-111, Cys-99/Cys-119, Cys-121/Cys-138, and Cys-127/Cys-135. TNFR-Cys repeat units follow at residues 42-75 (CKED…GTVC), 78-119 (CPPG…NAVC), and 121-162 (CSPG…DTLC). Residue Asn-110 is glycosylated (N-linked (GlcNAc...) asparagine). N-linked (GlcNAc...) asparagine glycosylation is present at Asn-173. A helical membrane pass occupies residues 203–223 (WWFLSGSLVIVIVCSTVGLII). At 224–283 (CVKRRKPRGDVVKVIVSVQRKRQEAEGEATVIEALQAPPDVTTVAVEETIPSFTGRSPNH) the chain is on the cytoplasmic side. The residue at position 240 (Ser-240) is a Phosphoserine.

This sequence belongs to the tumor necrosis factor receptor superfamily. In terms of assembly, interacts with TRAF2, TRAF3 and TRAF5. Interacts (via CRD1/TNFR-Cys 1) with CD160; this interaction is direct. Interacts with LTA and TNFSF14. Interacts (via CRD1/TNFR-Cys 1) in cis and trans with BTLA; the cis interactions inhibits the trans interactions. (Microbial infection) Interacts with herpes simplex virus 1/HHV-1 envelope glycoprotein D. As to quaternary structure, (Microbial infection) Interacts with herpes simplex virus 2/HHV-2 envelope glycoprotein D. Post-translationally, N-glycosylated. As to expression, widely expressed, with the highest expression in lung, spleen and thymus. Expressed in a subpopulation of B cells and monocytes. Expressed in naive T cells.

Its subcellular location is the cell membrane. Receptor for four distinct ligands: The TNF superfamily members TNFSF14/LIGHT and homotrimeric LTA/lymphotoxin-alpha and the immunoglobulin superfamily members BTLA and CD160, altogether defining a complex stimulatory and inhibitory signaling network. Signals via the TRAF2-TRAF3 E3 ligase pathway to promote immune cell survival and differentiation. Participates in bidirectional cell-cell contact signaling between antigen presenting cells and lymphocytes. In response to ligation of TNFSF14/LIGHT, delivers costimulatory signals to T cells, promoting cell proliferation and effector functions. Interacts with CD160 on NK cells, enhancing IFNG production and anti-tumor immune response. In the context of bacterial infection, acts as a signaling receptor on epithelial cells for CD160 from intraepithelial lymphocytes, triggering the production of antimicrobial proteins and pro-inflammatory cytokines. Upon binding to CD160 on activated CD4+ T cells, down-regulates CD28 costimulatory signaling, restricting memory and alloantigen-specific immune response. May interact in cis (on the same cell) or in trans (on other cells) with BTLA. In cis interactions, appears to play an immune regulatory role inhibiting in trans interactions in naive T cells to maintain a resting state. In trans interactions, can predominate during adaptive immune response to provide survival signals to effector T cells. Its function is as follows. (Microbial infection) Acts as a receptor for Herpes simplex virus 1/HHV-1. In terms of biological role, (Microbial infection) Acts as a receptor for Herpes simplex virus 2/HHV-2. The sequence is that of Tumor necrosis factor receptor superfamily member 14 from Homo sapiens (Human).